The following is a 477-amino-acid chain: Succinate-semialdehyde dehydrogenase [NADP(+)] (477 aa).

Residues 142 to 143 (WN), 166 to 169 (KHSE), and 218 to 219 (GS) each bind NADP(+). Residue E240 is the Proton acceptor of the active site. L241 lines the NADP(+) pocket. Catalysis depends on C274, which acts as the Nucleophile. E371 serves as a coordination point for NADP(+).

The protein belongs to the aldehyde dehydrogenase family.

It catalyses the reaction succinate semialdehyde + NADP(+) + H2O = succinate + NADPH + 2 H(+). It functions in the pathway amino-acid degradation; 4-aminobutanoate degradation. Catalyzes the NADP(+) dependent oxidation of succinate semialdehyde to succinate. The sequence is that of Succinate-semialdehyde dehydrogenase [NADP(+)] (ssdA) from Deinococcus radiodurans (strain ATCC 13939 / DSM 20539 / JCM 16871 / CCUG 27074 / LMG 4051 / NBRC 15346 / NCIMB 9279 / VKM B-1422 / R1).